A 132-amino-acid polypeptide reads, in one-letter code: Small ribosomal subunit protein uS8 (132 aa).

It belongs to the universal ribosomal protein uS8 family. As to quaternary structure, part of the 30S ribosomal subunit. Contacts proteins S5 and S12.

Functionally, one of the primary rRNA binding proteins, it binds directly to 16S rRNA central domain where it helps coordinate assembly of the platform of the 30S subunit. The chain is Small ribosomal subunit protein uS8 from Bacillus licheniformis (strain ATCC 14580 / DSM 13 / JCM 2505 / CCUG 7422 / NBRC 12200 / NCIMB 9375 / NCTC 10341 / NRRL NRS-1264 / Gibson 46).